We begin with the raw amino-acid sequence, 603 residues long: Protein SHORT-ROOT 2 (603 aa).

Disordered stretches follow at residues 11-58 (HHHH…HSHS) and 106-140 (DFSSSSSSRQFHSGTGAPSSAPVPPPPSATTSSAG). Over residues 31-44 (SYPSSRGSTSSPSS) the composition is skewed to low complexity. Positions 45-58 (HHTHNHTYYHHSHS) are enriched in basic residues. Residues 108–125 (SSSSSSRQFHSGTGAPSS) are compositionally biased toward low complexity. The region spanning 179–602 (AAPSSSGRWA…QPVVWASAWK (424 aa)) is the GRAS domain. A leucine repeat I (LRI) region spans residues 186–249 (RWAAQLLMEC…LTTSGPRTLR (64 aa)). The interval 268–354 (ALKFQELSPW…DTPHLSITTV (87 aa)) is VHIID. The VHIID motif lies at 318 to 322 (LHILD). The interval 370–406 (EIGQRLEKFARLMGVPFSFRAVHHSGDLADLDLAALD) is leucine repeat II (LRII). The PFYRE stretch occupies residues 416 to 514 (LAVNCVNALR…ERAVGRAIVD (99 aa)). An SAW region spans residues 517–602 (SCPASQSAER…QPVVWASAWK (86 aa)).

This sequence belongs to the GRAS family. Does not interact with SCR1.

It localises to the nucleus. Functionally, putative transcription factor involved in asymmetric cell division. The sequence is that of Protein SHORT-ROOT 2 (SHR2) from Oryza sativa subsp. japonica (Rice).